Here is a 150-residue protein sequence, read N- to C-terminus: Arginine repressor (150 aa).

It belongs to the ArgR family.

Its subcellular location is the cytoplasm. It participates in amino-acid biosynthesis; L-arginine biosynthesis [regulation]. Regulates arginine biosynthesis genes. This is Arginine repressor from Clostridium botulinum (strain Alaska E43 / Type E3).